Consider the following 208-residue polypeptide: Small ribosomal subunit protein uS4 (208 aa).

The S4 RNA-binding domain maps to 98–166 (SRLDNVVYRM…VKEAIEASRN (69 aa)).

Belongs to the universal ribosomal protein uS4 family. In terms of assembly, part of the 30S ribosomal subunit. Contacts protein S5. The interaction surface between S4 and S5 is involved in control of translational fidelity.

In terms of biological role, one of the primary rRNA binding proteins, it binds directly to 16S rRNA where it nucleates assembly of the body of the 30S subunit. Functionally, with S5 and S12 plays an important role in translational accuracy. This Kosmotoga olearia (strain ATCC BAA-1733 / DSM 21960 / TBF 19.5.1) protein is Small ribosomal subunit protein uS4.